Reading from the N-terminus, the 172-residue chain is MLSFLQNPRQAAAQVLNFALILSTAFMMWKGLSVASDSPSPIVVVLSGSMEPAFQRGDLLFLWNRNLLEETKVGEIVVYNVKGKDIPIVHRLVRKFGAGPKAKLLTKGDNNVADDTELYARGQDYIEREDIIGSVVGYIPFVGYVTILLSEHPWLKTVMLGMMGLVVVLQRE.

The Cytoplasmic segment spans residues 1–14 (MLSFLQNPRQAAAQ). Residues 15-35 (VLNFALILSTAFMMWKGLSVA) form a helical; Signal-anchor for type II membrane protein membrane-spanning segment. Residues 36 to 172 (SDSPSPIVVV…MGLVVVLQRE (137 aa)) are Lumenal-facing. Catalysis depends on charge relay system residues S49, H90, and D115. Positions 158–169 (VMLGMMGLVVVL) are C-terminal short (CTS) helix.

Belongs to the peptidase S26B family. Component of the signal peptidase complex (SPC) composed of a catalytic subunit SEC11 and three accessory subunits SPC1, SPC2 and SPC3. The complex induces a local thinning of the ER membrane which is used to measure the length of the signal peptide (SP) h-region of protein substrates. This ensures the selectivity of the complex towards h-regions shorter than 18-20 amino acids. SPC associates with the translocon complex.

It is found in the endoplasmic reticulum membrane. The catalysed reaction is Cleavage of hydrophobic, N-terminal signal or leader sequences from secreted and periplasmic proteins.. Catalytic component of the signal peptidase complex (SPC) which catalyzes the cleavage of N-terminal signal sequences from nascent proteins as they are translocated into the lumen of the endoplasmic reticulum. Specifically cleaves N-terminal signal peptides that contain a hydrophobic alpha-helix (h-region) shorter than 18-20 amino acids. This chain is Signal peptidase complex catalytic subunit sec11 (sec11), found in Sclerotinia sclerotiorum (strain ATCC 18683 / 1980 / Ss-1) (White mold).